The following is a 34-amino-acid chain: Photosystem II reaction center protein M (34 aa).

The helical transmembrane segment at 5–25 (ILGLMAVALFILIPTSFLLIL) threads the bilayer.

It belongs to the PsbM family. PSII is composed of 1 copy each of membrane proteins PsbA, PsbB, PsbC, PsbD, PsbE, PsbF, PsbH, PsbI, PsbJ, PsbK, PsbL, PsbM, PsbT, PsbX, PsbY, PsbZ, Psb30/Ycf12, at least 3 peripheral proteins of the oxygen-evolving complex and a large number of cofactors. It forms dimeric complexes.

The protein localises to the plastid. The protein resides in the chloroplast thylakoid membrane. Its function is as follows. One of the components of the core complex of photosystem II (PSII). PSII is a light-driven water:plastoquinone oxidoreductase that uses light energy to abstract electrons from H(2)O, generating O(2) and a proton gradient subsequently used for ATP formation. It consists of a core antenna complex that captures photons, and an electron transfer chain that converts photonic excitation into a charge separation. This subunit is found at the monomer-monomer interface. This is Photosystem II reaction center protein M from Tupiella akineta (Green alga).